A 543-amino-acid polypeptide reads, in one-letter code: Efflux pump mokI (543 aa).

The next 13 helical transmembrane spans lie at 30–50, 90–110, 125–145, 153–173, 185–205, 233–253, 261–281, 307–327, 340–360, 364–384, 394–416, 428–448, and 509–529; these read LVVTSVTLVVFLMLLDMSIIV, LLTLKYTFLAFLGVFEVGSAL, AVAGMGGSGLTNGAITILASA, LLIGIMMGLSQIAIVCGPLLG, CFYINLPVGALAAILLLAIHI, LLGFVLFAAFAVMISLALEWG, SSVIIGLFCGAGISLVVFGFW, LFLGFFSGALLTFSYYLPIYF, VYMLPGIGGQIVMAIVSGAII, GYYIPWALASGIIVSISAGLV, AAWVMYQFMGGFGRGCGMQTPII, ALGISLAMFGQTFGGSLFLTL, and VGASGATFLFAWGMGQVGLIW.

This sequence belongs to the major facilitator superfamily. TCR/Tet family.

Its subcellular location is the membrane. Efflux pump; part of the gene cluster that mediates the biosynthesis of monakolin K, also known as lovastatin, and which acts as a potent competitive inhibitor of HMG-CoA reductase. This chain is Efflux pump mokI, found in Monascus pilosus (Red mold).